Consider the following 175-residue polypeptide: Hypoxanthine-guanine phosphoribosyltransferase (175 aa).

Diphosphate contacts are provided by Lys40 and Gly41. The Mg(2+) site is built by Glu96 and Asp97. The active-site Proton acceptor is the Asp100. GMP is bound by residues Lys128, Phe149–Leu150, and Asp156. Arg162 serves as a coordination point for diphosphate.

This sequence belongs to the purine/pyrimidine phosphoribosyltransferase family. Requires Mg(2+) as cofactor.

It localises to the cytoplasm. The enzyme catalyses IMP + diphosphate = hypoxanthine + 5-phospho-alpha-D-ribose 1-diphosphate. It carries out the reaction GMP + diphosphate = guanine + 5-phospho-alpha-D-ribose 1-diphosphate. It participates in purine metabolism; IMP biosynthesis via salvage pathway; IMP from hypoxanthine: step 1/1. The protein operates within purine metabolism; GMP biosynthesis via salvage pathway; GMP from guanine: step 1/1. In terms of biological role, purine salvage pathway enzyme that catalyzes the transfer of the ribosyl-5-phosphate group from 5-phospho-alpha-D-ribose 1-diphosphate (PRPP) to the N9 position of the 6-oxopurines hypoxanthine and guanine to form the corresponding ribonucleotides IMP (inosine 5'-monophosphate) and GMP (guanosine 5'-monophosphate), with the release of PPi. In Mycoplasma genitalium (strain ATCC 33530 / DSM 19775 / NCTC 10195 / G37) (Mycoplasmoides genitalium), this protein is Hypoxanthine-guanine phosphoribosyltransferase (hpt).